A 750-amino-acid polypeptide reads, in one-letter code: Photosystem I P700 chlorophyll a apoprotein A1 (750 aa).

The next 8 helical transmembrane spans lie at 70–93 (VFSA…FHGA), 156–179 (LYCT…FHYH), 195–219 (LNHH…HVSL), 291–309 (IAHH…GHMY), 346–369 (WHAQ…HHMY), 385–411 (LSLF…IFMV), 433–455 (AIIS…LYIH), and 531–549 (FLVH…LILL). [4Fe-4S] cluster-binding residues include Cys573 and Cys582. 2 consecutive transmembrane segments (helical) span residues 589–610 (HVFL…HFSW) and 664–686 (LSAY…MFLF). Chlorophyll a' is bound at residue His675. Chlorophyll a is bound by residues Met683 and Tyr691. A phylloquinone-binding site is contributed by Trp692. A helical transmembrane segment spans residues 724–744 (AVGVTHYLLGGIATTWAFFLA).

This sequence belongs to the PsaA/PsaB family. In terms of assembly, the PsaA/B heterodimer binds the P700 chlorophyll special pair and subsequent electron acceptors. PSI consists of a core antenna complex that captures photons, and an electron transfer chain that converts photonic excitation into a charge separation. The eukaryotic PSI reaction center is composed of at least 11 subunits. P700 is a chlorophyll a/chlorophyll a' dimer, A0 is one or more chlorophyll a, A1 is one or both phylloquinones and FX is a shared 4Fe-4S iron-sulfur center. is required as a cofactor.

It localises to the plastid. Its subcellular location is the chloroplast thylakoid membrane. It carries out the reaction reduced [plastocyanin] + hnu + oxidized [2Fe-2S]-[ferredoxin] = oxidized [plastocyanin] + reduced [2Fe-2S]-[ferredoxin]. PsaA and PsaB bind P700, the primary electron donor of photosystem I (PSI), as well as the electron acceptors A0, A1 and FX. PSI is a plastocyanin-ferredoxin oxidoreductase, converting photonic excitation into a charge separation, which transfers an electron from the donor P700 chlorophyll pair to the spectroscopically characterized acceptors A0, A1, FX, FA and FB in turn. Oxidized P700 is reduced on the lumenal side of the thylakoid membrane by plastocyanin. The polypeptide is Photosystem I P700 chlorophyll a apoprotein A1 (Arabidopsis thaliana (Mouse-ear cress)).